A 389-amino-acid chain; its full sequence is Nicotinate phosphoribosyltransferase (389 aa).

The residue at position 216 (His-216) is a Phosphohistidine; by autocatalysis.

It belongs to the NAPRTase family. Post-translationally, transiently phosphorylated on a His residue during the reaction cycle. Phosphorylation strongly increases the affinity for substrates and increases the rate of nicotinate D-ribonucleotide production. Dephosphorylation regenerates the low-affinity form of the enzyme, leading to product release.

The enzyme catalyses nicotinate + 5-phospho-alpha-D-ribose 1-diphosphate + ATP + H2O = nicotinate beta-D-ribonucleotide + ADP + phosphate + diphosphate. It functions in the pathway cofactor biosynthesis; NAD(+) biosynthesis; nicotinate D-ribonucleotide from nicotinate: step 1/1. In terms of biological role, catalyzes the synthesis of beta-nicotinate D-ribonucleotide from nicotinate and 5-phospho-D-ribose 1-phosphate at the expense of ATP. This is Nicotinate phosphoribosyltransferase from Ralstonia nicotianae (strain ATCC BAA-1114 / GMI1000) (Ralstonia solanacearum).